The chain runs to 286 residues: Putative WUSCHEL-related homeobox 2 (286 aa).

Residues methionine 1–threonine 25 form a disordered region. A DNA-binding region (homeobox; WUS-type) is located at residues glycine 23–leucine 87.

Belongs to the WUS homeobox family.

The protein localises to the nucleus. Transcription factor which may be involved in developmental processes. The chain is Putative WUSCHEL-related homeobox 2 (WOX2) from Oryza sativa subsp. japonica (Rice).